A 103-amino-acid polypeptide reads, in one-letter code: Large ribosomal subunit protein uL24 (103 aa).

This sequence belongs to the universal ribosomal protein uL24 family. As to quaternary structure, part of the 50S ribosomal subunit.

Functionally, one of two assembly initiator proteins, it binds directly to the 5'-end of the 23S rRNA, where it nucleates assembly of the 50S subunit. In terms of biological role, one of the proteins that surrounds the polypeptide exit tunnel on the outside of the subunit. The sequence is that of Large ribosomal subunit protein uL24 from Actinobacillus succinogenes (strain ATCC 55618 / DSM 22257 / CCUG 43843 / 130Z).